Reading from the N-terminus, the 129-residue chain is Calcitonin gene-related peptide 2 (129 aa).

A signal peptide spans 1 to 25; the sequence is MGFGKPSSFLAFSILVLCQAGSLQA. Positions 26–81 are excised as a propeptide; the sequence is QPLRSSLESLPDPAALSEKEGRLLLAALVKAYVQRKTNELEQEQEQEMEGSSLTAQ. Cysteines 85 and 90 form a disulfide. F120 bears the Phenylalanine amide mark. The propeptide occupies 126–129; the sequence is DLQA.

This sequence belongs to the calcitonin family.

It localises to the secreted. Functionally, CALCB/CGRP2 is a peptide hormone that induces vasodilation mediated by the CALCRL-RAMP1 receptor complex. Dilates a variety of vessels including the coronary, cerebral and systemic vasculature. Its abundance in the CNS also points toward a neurotransmitter or neuromodulator role. The sequence is that of Calcitonin gene-related peptide 2 (CALCB) from Equus caballus (Horse).